We begin with the raw amino-acid sequence, 136 residues long: MSVLVYFSSSSENTLRFIERVGLPAVRIPLNERERIQVDEPYILVVPSYGGGGTAGAVPRQVIRFLNDPHNRALIRGVIAAGNRNFGDAFCRAGDLISQKCGVPYLYRFELMGTQQDVENVRKGVNEFWQRQPQNA.

This sequence belongs to the NrdI family.

Its function is as follows. Probably involved in ribonucleotide reductase function. The polypeptide is Protein NrdI (Enterobacter sp. (strain 638)).